The following is a 513-amino-acid chain: Probable G-protein coupled receptor Mth-like 9 (513 aa).

The first 19 residues, 1-19, serve as a signal peptide directing secretion; the sequence is MVSPLIILLIIWLSVGAKS. Over 20-207 the chain is Extracellular; that stretch reads VEIASINHPC…NCERFQTGYR (188 aa). 4 cysteine pairs are disulfide-bonded: Cys29-Cys82, Cys84-Cys89, Cys93-Cys181, and Cys94-Cys107. N-linked (GlcNAc...) asparagine glycosylation is present at Asn36. Residues Asn106, Asn125, and Asn165 are each glycosylated (N-linked (GlcNAc...) asparagine). The chain crosses the membrane as a helical span at residues 208–228; the sequence is VWIYAICSIIAIIINIFILSL. At 229–242 the chain is on the cytoplasmic side; the sequence is LGSVRDARKSHYGQ. Residues 243–263 form a helical membrane-spanning segment; it reads LIIYYLLSMIVGYSLLVYLAL. Over 264 to 276 the chain is Extracellular; it reads KNPMKLSHVACRN. A helical transmembrane segment spans residues 277–297; that stretch reads IGFLAYFCIMLSFVFLAICSL. Topologically, residues 298–314 are cytoplasmic; that stretch reads DFLLKFKQKAVRSSVRR. A helical transmembrane segment spans residues 315-335; it reads LSLALAVLAVIGLRFLVSLAQ. Residues 336–360 are Extracellular-facing; that stretch reads DSKLPKHFKPGMGEDYCWFDVRTWG. A helical transmembrane segment spans residues 361–381; that stretch reads ILIYYYGPIALLLIFSIVCCL. Over 382–403 the chain is Cytoplasmic; the sequence is KAYFSIYELPPDTQYILGTQLK. A helical membrane pass occupies residues 404–424; sequence IVKTHFYAFSAYIVGVFAVWI. Over 425-438 the chain is Extracellular; it reads REIVVYIMARVREH. The chain crosses the membrane as a helical span at residues 439-459; the sequence is FFIIDFWSGICILGLAIAGFI. Residues 460-513 are Cytoplasmic-facing; sequence LLLGKNLHVKSWWAINVESSQTDLSIINARVYKFDEKGDLKSSDSPYKPTVTSL.

Belongs to the G-protein coupled receptor 2 family. Mth subfamily.

Its subcellular location is the cell membrane. This Drosophila melanogaster (Fruit fly) protein is Probable G-protein coupled receptor Mth-like 9 (mthl9).